A 224-amino-acid chain; its full sequence is Urease accessory protein UreF (224 aa).

Belongs to the UreF family. As to quaternary structure, ureD, UreF and UreG form a complex that acts as a GTP-hydrolysis-dependent molecular chaperone, activating the urease apoprotein by helping to assemble the nickel containing metallocenter of UreC. The UreE protein probably delivers the nickel.

The protein resides in the cytoplasm. Required for maturation of urease via the functional incorporation of the urease nickel metallocenter. The protein is Urease accessory protein UreF of Pseudomonas putida (strain ATCC 47054 / DSM 6125 / CFBP 8728 / NCIMB 11950 / KT2440).